The sequence spans 254 residues: Pre-miRNA 5'-monophosphate methyltransferase (254 aa).

Positions 34–254 constitute a Bin3-type SAM domain; it reads ENRLSLIPEA…DRSLLLFRRQ (221 aa). Residues arginine 36, asparagine 66, aspartate 99, and 124-125 contribute to the S-adenosyl-L-methionine site; that span reads DI.

The protein belongs to the methyltransferase superfamily.

It localises to the cytoplasm. The enzyme catalyses a 5'-end 5'-phospho-ribonucleoside-RNA + S-adenosyl-L-methionine = a 5'-end (5'-methylphospho)-ribonucleoside-RNA + S-adenosyl-L-homocysteine. The catalysed reaction is a 5'-end 5'-phospho-ribonucleoside-RNA + 2 S-adenosyl-L-methionine = a 5'-end (5'-bismethylphospho)-ribonucleoside-RNA + 2 S-adenosyl-L-homocysteine. In terms of biological role, O-methyltransferase that specifically monomethylates 5'-monophosphate of cytoplasmic histidyl tRNA (tRNA(His)), acting as a capping enzyme by protecting tRNA(His) from cleavage by DICER1. Also able, with less efficiently, to methylate the 5' monophosphate of a subset of pre-miRNAs, acting as a negative regulator of miRNA processing. The 5' monophosphate of pre-miRNAs is recognized by DICER1 and is required for pre-miRNAs processing: methylation at this position reduces the processing of pre-miRNAs by DICER1. Was also reported to mediate dimethylation of pre-miR-145; however dimethylation cannot be reproduced by another group which observes a monomethylation of pre-miR-145. This Danio rerio (Zebrafish) protein is Pre-miRNA 5'-monophosphate methyltransferase (bcdin3d).